Here is a 479-residue protein sequence, read N- to C-terminus: Adenosylhomocysteinase (479 aa).

Substrate-binding residues include Thr-66, Asp-142, and Glu-203. 204–206 (TTT) serves as a coordination point for NAD(+). 2 residues coordinate substrate: Lys-233 and Asp-237. NAD(+) is bound by residues Asn-238, 267–272 (GYGDVG), Glu-290, Asn-325, 346–348 (IGH), and Asn-394.

The protein belongs to the adenosylhomocysteinase family. NAD(+) is required as a cofactor.

It localises to the cytoplasm. The catalysed reaction is S-adenosyl-L-homocysteine + H2O = L-homocysteine + adenosine. It participates in amino-acid biosynthesis; L-homocysteine biosynthesis; L-homocysteine from S-adenosyl-L-homocysteine: step 1/1. Its function is as follows. May play a key role in the regulation of the intracellular concentration of adenosylhomocysteine. The chain is Adenosylhomocysteinase from Nitratidesulfovibrio vulgaris (strain ATCC 29579 / DSM 644 / CCUG 34227 / NCIMB 8303 / VKM B-1760 / Hildenborough) (Desulfovibrio vulgaris).